Consider the following 312-residue polypeptide: Taste receptor type 2 member 62 (312 aa).

Residues 1–4 (MPSL) are Extracellular-facing. A helical transmembrane segment spans residues 5–27 (PTLIFIAIFCLESLAAMLQNGFL). Topologically, residues 28 to 39 (VTMLGREWVRCR) are cytoplasmic. A helical membrane pass occupies residues 40 to 62 (MLSTSDMIVACLAASRFCLHGVA). The Extracellular portion of the chain corresponds to 63–81 (MANNLLASLDFSRAVPYMN). Residues 82 to 104 (IFWDLFNALTLWFTALLAAFYCV) traverse the membrane as a helical segment. Topologically, residues 105–127 (KISSFSHPTFAWLKWRISRLVPK) are cytoplasmic. A helical membrane pass occupies residues 128-150 (LIKGSLIICGLEVISSATGNILF). At 151-182 (GQRKVSLSSYRNETLVYRVQASFQLYFFLYDG) the chain is on the extracellular side. The N-linked (GlcNAc...) asparagine glycan is linked to asparagine 162. A helical transmembrane segment spans residues 183–205 (FVWSIPFLLFLVSTVLLIVSLCW). The Cytoplasmic portion of the chain corresponds to 206–231 (QLGQMRDLRPGPCDPSTQAYTMALKS). A helical transmembrane segment spans residues 232–254 (LTFSLIFCTLYFLSLFASALKII). Over 255 to 258 (NFQN) the chain is Extracellular. Residues 259-281 (HWHWAWEVLIYANICLHSTVLVL) form a helical membrane-spanning segment. At 282 to 312 (RSPKLKKGLKTWPQLQCPCDAGSQGFGRCWP) the chain is on the cytoplasmic side.

It belongs to the G-protein coupled receptor T2R family.

It localises to the membrane. In terms of biological role, receptor that may play a role in the perception of bitterness and is gustducin-linked. May play a role in sensing the chemical composition of the gastrointestinal content. The activity of this receptor may stimulate alpha gustducin, mediate PLC-beta-2 activation and lead to the gating of TRPM5. The protein is Taste receptor type 2 member 62 (TAS2R62) of Pan paniscus (Pygmy chimpanzee).